The primary structure comprises 149 residues: Large ribosomal subunit protein bL9 (149 aa).

It belongs to the bacterial ribosomal protein bL9 family.

Its function is as follows. Binds to the 23S rRNA. The polypeptide is Large ribosomal subunit protein bL9 (Klebsiella pneumoniae subsp. pneumoniae (strain ATCC 700721 / MGH 78578)).